The primary structure comprises 838 residues: Protein P (838 aa).

Positions 1-177 (MPLSYQHFRK…FCGSPYSWEQ (177 aa)) are terminal protein domain (TP). A spacer region spans residues 178-341 (ELQHQTSTRH…YCLTHIVNLL (164 aa)). Disordered stretches follow at residues 215–238 (QSRL…SGSI) and 285–311 (STSK…RSQS). A compositionally biased stretch (polar residues) spans 285 to 294 (STSKRQSSSG). The segment at 342–685 (EDWGPCTEHG…YLHLYPVARQ (344 aa)) is polymerase/reverse transcriptase domain (RT). The 244-residue stretch at 352–595 (EHNIRIPRTP…YSLNFMGYVI (244 aa)) folds into the Reverse transcriptase domain. Mg(2+) contacts are provided by D424, D546, and D547.

It belongs to the hepadnaviridae P protein family.

The enzyme catalyses DNA(n) + a 2'-deoxyribonucleoside 5'-triphosphate = DNA(n+1) + diphosphate. It carries out the reaction Endonucleolytic cleavage to 5'-phosphomonoester.. Activated by host HSP70 and HSP40 in vitro to be able to bind the epsilon loop of the pgRNA. Because deletion of the RNase H region renders the protein partly chaperone-independent, the chaperones may be needed indirectly to relieve occlusion of the RNA-binding site by this domain. Inhibited by several reverse-transcriptase inhibitors: Lamivudine, Adefovir and Entecavir. Functionally, multifunctional enzyme that converts the viral RNA genome into dsDNA in viral cytoplasmic capsids. This enzyme displays a DNA polymerase activity that can copy either DNA or RNA templates, and a ribonuclease H (RNase H) activity that cleaves the RNA strand of RNA-DNA heteroduplexes in a partially processive 3'- to 5'-endonucleasic mode. Neo-synthesized pregenomic RNA (pgRNA) are encapsidated together with the P protein, and reverse-transcribed inside the nucleocapsid. Initiation of reverse-transcription occurs first by binding the epsilon loop on the pgRNA genome, and is initiated by protein priming, thereby the 5'-end of (-)DNA is covalently linked to P protein. Partial (+)DNA is synthesized from the (-)DNA template and generates the relaxed circular DNA (RC-DNA) genome. After budding and infection, the RC-DNA migrates in the nucleus, and is converted into a plasmid-like covalently closed circular DNA (cccDNA). The activity of P protein does not seem to be necessary for cccDNA generation, and is presumably released from (+)DNA by host nuclear DNA repair machinery. The sequence is that of Protein P from Homo sapiens (Human).